We begin with the raw amino-acid sequence, 596 residues long: Germinal center kinase 3 (596 aa).

The span at 1-54 shows a compositional bias: low complexity; it reads MSSSNLAGNTNTTTTSSAASAAAAHSAANASTITSEYSTTQTTTGTFNTDTLSS. The disordered stretch occupies residues 1–80; the sequence is MSSSNLAGNT…PPPPPQVSSP (80 aa). Phosphothreonine; by autocatalysis is present on residues Thr13 and Thr32. A compositionally biased stretch (pro residues) spans 67-77; sequence SQPPPPPPPQV. The Protein kinase domain occupies 108–386; the sequence is YKLDESIGVG…ASELLKYSFF (279 aa). ATP is bound by residues 114 to 122 and Lys137; that span reads IGVGATATV. Ser190 is subject to Phosphoserine; by autocatalysis. The Proton acceptor role is filled by Asp240. Thr280 is subject to Phosphothreonine. Ser405 carries the phosphoserine; by autocatalysis modification. Ser419 bears the Phosphoserine mark. Residues 429–496 are disordered; it reads NWEFEYDSPQ…EGGGATTPCP (68 aa). The span at 432 to 450 shows a compositional bias: acidic residues; the sequence is FEYDSPQESDDDSDLEDEE. The span at 466–479 shows a compositional bias: gly residues; it reads GAAGAAGGATGGAA.

This sequence belongs to the protein kinase superfamily. STE Ser/Thr protein kinase family. STE20 subfamily. Interacts (via C-terminus) with clh-3; required for the phosphorylation-mediated inhibition of clh-3 function. Interacts (via C-terminus) with wnk-1; the interaction is direct. Post-translationally, phosphorylated at Thr-280 and Ser-419 probably by wnk-1; phosphorylation results in weak activation. Predominantly autophosphorylated at Thr-32 and Ser-190 and weakly autophosphorylated at Thr-13 and Ser-405 in vitro. In terms of tissue distribution, ubiquitously expressed with a higher expression in the excretory cell. Expressed in both male and female germ cells; up-regulated in maturing spermatocytes but absent in mature sperm.

The protein resides in the cytoplasm. It localises to the nucleus. It carries out the reaction L-seryl-[protein] + ATP = O-phospho-L-seryl-[protein] + ADP + H(+). The catalysed reaction is L-threonyl-[protein] + ATP = O-phospho-L-threonyl-[protein] + ADP + H(+). Its function is as follows. Plays a role in osmotic stress responses by regulating ion homeostasis and by controlling cell volume via the phosphorylation-mediated inhibition of the chloride channel clh-3. In addition, increases gpdh-1 translation upon osmotic stress, likely downstream of wnk-1. Involved in several developmental processes including the tubular formation of the excretory canals, the formation of the intestine and the progression through larval stages. In addition, required for germ line development by controlling meiosis and chromosomal segregation during spermatogenesis. By controlling clh-3 activity, may regulate the development of the excretory canals and fertility. This chain is Germinal center kinase 3, found in Caenorhabditis elegans.